Reading from the N-terminus, the 238-residue chain is Probable transcriptional regulatory protein SMU_1789c (238 aa).

The protein belongs to the TACO1 family. YeeN subfamily.

Its subcellular location is the cytoplasm. The protein is Probable transcriptional regulatory protein SMU_1789c of Streptococcus mutans serotype c (strain ATCC 700610 / UA159).